Here is a 379-residue protein sequence, read N- to C-terminus: uncharacterized protein (379 aa).

3 disordered regions span residues 1-20 (MLPQNSQVVHGVQDGPPVGP), 227-290 (VSQR…LQGH), and 331-371 (PGCA…RAGH). The segment covering 7–20 (QVVHGVQDGPPVGP) has biased composition (low complexity). Positions 249-261 (GCKDPRVRKEPGR) are enriched in basic and acidic residues.

This is an uncharacterized protein from Dryophytes versicolor (chameleon treefrog).